Reading from the N-terminus, the 72-residue chain is UPF0150 protein ssl0738 (72 aa).

It belongs to the UPF0150 family.

This Synechocystis sp. (strain ATCC 27184 / PCC 6803 / Kazusa) protein is UPF0150 protein ssl0738.